The following is a 77-amino-acid chain: RNA-binding protein Hfq (77 aa).

In terms of domain architecture, Sm spans 10–70; that stretch reads DAFLNHVRKA…ISTIMPGQPI (61 aa).

This sequence belongs to the Hfq family. In terms of assembly, homohexamer.

Its function is as follows. RNA chaperone that binds small regulatory RNA (sRNAs) and mRNAs to facilitate mRNA translational regulation in response to envelope stress, environmental stress and changes in metabolite concentrations. Also binds with high specificity to tRNAs. This chain is RNA-binding protein Hfq, found in Cereibacter sphaeroides (strain ATCC 17029 / ATH 2.4.9) (Rhodobacter sphaeroides).